Here is a 1378-residue protein sequence, read N- to C-terminus: DNA-directed RNA polymerase subunit beta (1378 aa).

The protein belongs to the RNA polymerase beta chain family. The RNAP catalytic core consists of 2 alpha, 1 beta, 1 beta' and 1 omega subunit. When a sigma factor is associated with the core the holoenzyme is formed, which can initiate transcription.

It catalyses the reaction RNA(n) + a ribonucleoside 5'-triphosphate = RNA(n+1) + diphosphate. Its function is as follows. DNA-dependent RNA polymerase catalyzes the transcription of DNA into RNA using the four ribonucleoside triphosphates as substrates. This is DNA-directed RNA polymerase subunit beta from Campylobacter jejuni (strain RM1221).